Consider the following 37-residue polypeptide: Kappa-actitoxin-Bgr1a (37 aa).

The ShKT domain occupies 2–37 (CRDWFKETACRHAKSLGNCRTSQKYRANCAKTCELC). Cystine bridges form between cysteine 2–cysteine 37, cysteine 11–cysteine 30, and cysteine 20–cysteine 34. Residues 25–26 (KY) are crucial for binding to potassium channels.

The protein belongs to the sea anemone type 1 potassium channel toxin family. Type 1b subfamily.

The protein resides in the secreted. Its subcellular location is the nematocyst. Functionally, inhibits voltage-dependent potassium channels of the Kv1 family (Kv1.1/KCNA1 (Kd=6 nM), Kv1.2/KCNA2 (Kd=15 nM), Kv1.3/KCNA3 (Kd=10-39 nM), Kv1.6/KCNA6, and KCa3.1/KCNN4 (Kd=172 nM)). The polypeptide is Kappa-actitoxin-Bgr1a (Bunodosoma granuliferum (Red warty sea anemone)).